Reading from the N-terminus, the 339-residue chain is Heat-inducible transcription repressor HrcA (339 aa).

The protein belongs to the HrcA family.

Functionally, negative regulator of class I heat shock genes (grpE-dnaK-dnaJ and groELS operons). Prevents heat-shock induction of these operons. This chain is Heat-inducible transcription repressor HrcA, found in Parafrankia sp. (strain EAN1pec).